A 350-amino-acid chain; its full sequence is MAAAAGRSLLLLLCSRGGGGGAGGCGALTAGCFPGLGVSRHRPHQQHRTAHQRPASWQSVGAAYCSTVVPSDDVTVVYQNGLPVISVRLPSRRERCQFTLKPISDSVGVFLRQLQEEDRGIDRVAIYSPDGVRVAASTGIDLLLLDDFKLVINDLTYHVRPPKRDLLSHEDAATLNDVKTLVQQLYTTLCIEQHQLNKERELVERLEDLKQQLAPLEKVRIEISRKAEKRTTLVLWGGLAYMATQFGILARLTWWEYSWDIMEPVTYFITYGSAMAMYAYFVMTRQEYVYPEARDRQYLLFFHKGAKKSRFDLEKYNQLKDAIAQAEMDLKRLRDPLQVHLPLRQIGEKE.

The transit peptide at 1-49 directs the protein to the mitochondrion; it reads MAAAAGRSLLLLLCSRGGGGGAGGCGALTAGCFPGLGVSRHRPHQQHRT. The Mitochondrial matrix portion of the chain corresponds to 50–232; it reads AHQRPASWQS…ISRKAEKRTT (183 aa). Phosphoserine; by CaMK2 occurs at positions 56 and 91. An N-terminal MCU domain region spans residues 74–164; it reads VTVVYQNGLP…LTYHVRPPKR (91 aa). Position 96 is an S-glutathionyl cysteine (Cys-96). The stretch at 191 to 220 forms a coiled coil; sequence IEQHQLNKERELVERLEDLKQQLAPLEKVR. A helical transmembrane segment spans residues 233–256; that stretch reads LVLWGGLAYMATQFGILARLTWWE. Over 257–264 the chain is Mitochondrial intermembrane; that stretch reads YSWDIMEP. The short motif at 259–267 is the Selectivity filter element; sequence WDIMEPVTY. Glu-263 provides a ligand contact to Ca(2+). Residues 265 to 282 traverse the membrane as a helical segment; sequence VTYFITYGSAMAMYAYFV. The Mitochondrial matrix segment spans residues 283 to 350; the sequence is MTRQEYVYPE…LPLRQIGEKE (68 aa). A juxtamembrane helix region spans residues 284 to 289; sequence TRQEYV. A coiled-coil region spans residues 310 to 338; sequence RFDLEKYNQLKDAIAQAEMDLKRLRDPLQ. Position 331 is an N6-acetyllysine (Lys-331).

This sequence belongs to the MCU (TC 1.A.77) family. As to quaternary structure, homotetramer. Component of the uniplex complex, composed of MCU, EMRE/SMDT1, MICU1 and MICU2 (or MICU3) in a 4:4:1:1 stoichiometry. Interacts with CCDC109B/MCUB; this inhibits channel activity. Interacts with MCUR1. Interactions with MICU1 and MCUR1 are mutually exclusive. Interacts with SLC25A23. In terms of processing, phosphorylation by CaMK2 in heart leads to increased MCU current. The regulation of MCU by CaMK2 is however subject to discussion: another group was unable to reproduce these results. Phosphorylated on tyrosines by PTK2B/PYK2, promoting oligomerization. Glutathionylation at Cys-96 in response to reactive oxygen species (ROS) promotes MCU higher-order assembly, leading to constitutive activation of the MCU channel and mitochondrial calcium overload. Post-translationally, undergoes proteolytic degradation by SPG7. Detected in heart muscle (at protein level). Expressed in skeletal muscle, heart, kidney, liver, brain, lung, white fat and spleen.

The protein localises to the mitochondrion inner membrane. The enzyme catalyses Ca(2+)(in) = Ca(2+)(out). Its activity is regulated as follows. MCU channel activity is regulated by the heterodimer composed of MICU1 and either MICU2 or MICU3, which act as calcium-sensors. At low calcium levels, MICU1 occludes the pore of the MCU channel, preventing mitochondrial calcium uptake. At higher calcium levels, calcium-binding to MICU1 and MICU2 (or MICU3) induces a conformational change that weakens MCU-MICU1 interactions and moves the MICU1-MICU2 heterodimer away from the pore, allowing calcium permeation through the channel. MCU channel activity is gated by EMRE/SMDT1 via the juxtamembrane helix loop. Inhibited by ruthenium red or its derivative Ru360. Channel-forming and calcium-conducting subunit of the mitochondrial inner membrane calcium uniporter complex (uniplex), which mediates calcium uptake into the mitochondrial matrix. MCU channel activity is regulated by the calcium-sensor subunits of the uniplex MICU1 and MICU2 (or MICU3). Mitochondrial calcium homeostasis plays key roles in cellular physiology and regulates ATP production, cytoplasmic calcium signals and activation of cell death pathways. Involved in buffering the amplitude of systolic calcium rises in cardiomyocytes. While dispensable for baseline homeostatic cardiac function, acts as a key regulator of short-term mitochondrial calcium loading underlying a 'fight-or-flight' response during acute stress: acts by mediating a rapid increase of mitochondrial calcium in pacemaker cells. Participates in mitochondrial permeability transition during ischemia-reperfusion injury. Mitochondrial calcium uptake in skeletal muscle cells is involved in muscle size in adults. Regulates synaptic vesicle endocytosis kinetics in central nerve terminal. Regulates glucose-dependent insulin secretion in pancreatic beta-cells by regulating mitochondrial calcium uptake. Involved in antigen processing and presentation. In Mus musculus (Mouse), this protein is Calcium uniporter protein, mitochondrial.